The sequence spans 401 residues: Voltage-gated potassium channel subunit beta-1 (401 aa).

NADP(+) is bound by residues T90, W91, Q97, and D119. Y124 functions as the Proton donor/acceptor in the catalytic mechanism. Residues N192, S222, R223, Q248, W277, S278, P279, L280, A281, C282, K288, R298, G357, S359, Q363, E366, and N367 each contribute to the NADP(+) site.

This sequence belongs to the shaker potassium channel beta subunit family. Homotetramer. Interaction with tetrameric potassium channel alpha subunits gives rise to a heterooctamer. Identified in potassium channel complexes containing KCNA1, KCNA2, KCNA4, KCNA5, KCNA6, KCNAB1 and KCNAB2. Part of a complex containing KCNA1, KCNA4 and LGI1; interaction with LGI1 inhibits down-regulation of KCNA1 channel activity. Interacts with the dimer formed by GNB1 and GNG2; this enhances KCNA1 binding. Interacts with SQSTM1.

It localises to the cytoplasm. The protein resides in the membrane. Its subcellular location is the cell membrane. The enzyme catalyses a primary alcohol + NADP(+) = an aldehyde + NADPH + H(+). The catalysed reaction is a secondary alcohol + NADP(+) = a ketone + NADPH + H(+). In terms of biological role, regulatory subunit of the voltage-gated potassium (Kv) channels composed of pore-forming and potassium-conducting alpha subunits and of regulatory beta subunits. The beta-1/KCNAB1 cytoplasmic subunit mediates closure of delayed rectifier potassium channels by physically obstructing the pore via its N-terminal domain and increases the speed of channel closure for other family members. Promotes the inactivation of KCNA1, KCNA2, KCNA4, KCNA5 and KCNA6 alpha subunit-containing channels. Displays nicotinamide adenine dinucleotide phosphate (NADPH)-dependent aldoketoreductase activity by catalyzing the NADPH-dependent reduction of a variety of endogenous aldehydes and ketones. The binding of NADPH is required for efficient down-regulation of potassium channel activity. Oxidation of the bound NADPH restrains N-terminal domain from blocking the channel, thereby decreasing N-type inactivation of potassium channel activity. The polypeptide is Voltage-gated potassium channel subunit beta-1 (KCNAB1) (Bos taurus (Bovine)).